Reading from the N-terminus, the 223-residue chain is Phosphoribosylformylglycinamidine synthase subunit PurQ (223 aa).

Positions 3–223 (FAVLVFPGSN…MVKSWREQHV (221 aa)) constitute a Glutamine amidotransferase type-1 domain. The active-site Nucleophile is the Cys-85. Active-site residues include His-193 and Glu-195.

As to quaternary structure, part of the FGAM synthase complex composed of 1 PurL, 1 PurQ and 2 PurS subunits.

It is found in the cytoplasm. It carries out the reaction N(2)-formyl-N(1)-(5-phospho-beta-D-ribosyl)glycinamide + L-glutamine + ATP + H2O = 2-formamido-N(1)-(5-O-phospho-beta-D-ribosyl)acetamidine + L-glutamate + ADP + phosphate + H(+). The enzyme catalyses L-glutamine + H2O = L-glutamate + NH4(+). It functions in the pathway purine metabolism; IMP biosynthesis via de novo pathway; 5-amino-1-(5-phospho-D-ribosyl)imidazole from N(2)-formyl-N(1)-(5-phospho-D-ribosyl)glycinamide: step 1/2. In terms of biological role, part of the phosphoribosylformylglycinamidine synthase complex involved in the purines biosynthetic pathway. Catalyzes the ATP-dependent conversion of formylglycinamide ribonucleotide (FGAR) and glutamine to yield formylglycinamidine ribonucleotide (FGAM) and glutamate. The FGAM synthase complex is composed of three subunits. PurQ produces an ammonia molecule by converting glutamine to glutamate. PurL transfers the ammonia molecule to FGAR to form FGAM in an ATP-dependent manner. PurS interacts with PurQ and PurL and is thought to assist in the transfer of the ammonia molecule from PurQ to PurL. In Staphylococcus aureus (strain bovine RF122 / ET3-1), this protein is Phosphoribosylformylglycinamidine synthase subunit PurQ.